The primary structure comprises 591 residues: L-fucose isomerase (591 aa).

Active-site proton acceptor residues include E337 and D361. Mn(2+)-binding residues include E337, D361, and H528.

It belongs to the L-fucose isomerase family. Homohexamer. It depends on Mn(2+) as a cofactor.

The protein localises to the cytoplasm. The catalysed reaction is L-fucose = L-fuculose. Its pathway is carbohydrate degradation; L-fucose degradation; L-lactaldehyde and glycerone phosphate from L-fucose: step 1/3. Its function is as follows. Converts the aldose L-fucose into the corresponding ketose L-fuculose. This Klebsiella pneumoniae (strain 342) protein is L-fucose isomerase.